Consider the following 108-residue polypeptide: PTS system fructose-like EIIB component 1 (108 aa).

A PTS EIIB type-2 domain is found at 1–104 (MSKKLIALCA…IIKEIEEMIA (104 aa)). C11 functions as the Phosphocysteine intermediate in the catalytic mechanism. Position 11 is a phosphocysteine; by EIIA (C11).

It localises to the cytoplasm. The catalysed reaction is D-fructose(out) + N(pros)-phospho-L-histidyl-[protein] = D-fructose 1-phosphate(in) + L-histidyl-[protein]. In terms of biological role, the phosphoenolpyruvate-dependent sugar phosphotransferase system (sugar PTS), a major carbohydrate active transport system, catalyzes the phosphorylation of incoming sugar substrates concomitantly with their translocation across the cell membrane. The enzyme II FryABC PTS system is involved in fructose transport. This chain is PTS system fructose-like EIIB component 1 (fryB), found in Escherichia coli O157:H7.